Here is a 481-residue protein sequence, read N- to C-terminus: Docking protein 1 (481 aa).

Met-1 carries the post-translational modification N-acetylmethionine. One can recognise a PH domain in the interval Ala-4 to Phe-119. The residue at position 48 (Ser-48) is a Phosphoserine. The IRS-type PTB domain occupies Glu-151 to Gly-259. Ser-269 and Ser-291 each carry phosphoserine. Residues His-270 to Pro-293 are disordered. Tyr-296 carries the post-translational modification Phosphotyrosine. Residues Pro-307–Gly-329 form a disordered region. The segment covering Ser-310–Gln-325 has biased composition (polar residues). Phosphotyrosine is present on residues Tyr-337 and Tyr-341. Tyr-362 bears the Phosphotyrosine; by INSR mark. A Phosphotyrosine modification is found at Tyr-377. Phosphotyrosine; by INSR is present on Tyr-398. The interval Pro-404–Thr-481 is disordered. Phosphotyrosine is present on Tyr-409. Phosphoserine is present on Ser-416. A compositionally biased stretch (polar residues) spans Ala-436–Ser-458. Tyr-449 carries the phosphotyrosine modification. Ser-460 carries the phosphoserine modification.

The protein belongs to the DOK family. Type A subfamily. As to quaternary structure, interacts with ABL1. Interacts with RasGAP and INPP5D/SHIP1. Interacts directly with phosphorylated ITGB3. Interacts with SRMS (via the SH2 and SH3 domains). Constitutively tyrosine-phosphorylated. Phosphorylated by TEC. Phosphorylated by LYN. Phosphorylated on tyrosine residues by the insulin receptor kinase. Results in the negative regulation of the insulin signaling pathway. Phosphorylated on tyrosine residues by SRMS. In terms of tissue distribution, expressed in pancreas, heart, leukocyte and spleen. Expressed in both resting and activated peripheral blood T-cells. Expressed in breast cancer.

It is found in the cytoplasm. The protein localises to the nucleus. It localises to the perinuclear region. Functionally, DOK proteins are enzymatically inert adaptor or scaffolding proteins. They provide a docking platform for the assembly of multimolecular signaling complexes. DOK1 appears to be a negative regulator of the insulin signaling pathway. Modulates integrin activation by competing with talin for the same binding site on ITGB3. In Homo sapiens (Human), this protein is Docking protein 1 (DOK1).